The following is a 100-amino-acid chain: Ferredoxin (100 aa).

Positions 1-8 (MLSQVCRF) are excised as a propeptide. The 92-residue stretch at 9 to 100 (GTITAVKGGV…GENDGAVFEL (92 aa)) folds into the 2Fe-2S ferredoxin-type domain. Residues Cys-46, Cys-52, Cys-55, and Cys-85 each contribute to the [2Fe-2S] cluster site.

[2Fe-2S] cluster is required as a cofactor.

The protein localises to the hydrogenosome. Its function is as follows. Ferredoxins are iron-sulfur proteins that transfer electrons in a wide variety of metabolic reactions. It links pyruvate:ferredoxin oxidoreductase to hydrogenase. The sequence is that of Ferredoxin from Trichomonas vaginalis.